The primary structure comprises 523 residues: 2-isopropylmalate synthase (523 aa).

In terms of domain architecture, Pyruvate carboxyltransferase spans 5 to 267 (VIIFDTTLRD…HTNINHHEIW (263 aa)). 4 residues coordinate Mn(2+): aspartate 14, histidine 202, histidine 204, and asparagine 238. Residues 392–523 (RLDYFSVQSG…QNKENNKETV (132 aa)) form a regulatory domain region.

This sequence belongs to the alpha-IPM synthase/homocitrate synthase family. LeuA type 1 subfamily. In terms of assembly, homodimer. The cofactor is Mn(2+).

It is found in the cytoplasm. The enzyme catalyses 3-methyl-2-oxobutanoate + acetyl-CoA + H2O = (2S)-2-isopropylmalate + CoA + H(+). The protein operates within amino-acid biosynthesis; L-leucine biosynthesis; L-leucine from 3-methyl-2-oxobutanoate: step 1/4. Its function is as follows. Catalyzes the condensation of the acetyl group of acetyl-CoA with 3-methyl-2-oxobutanoate (2-ketoisovalerate) to form 3-carboxy-3-hydroxy-4-methylpentanoate (2-isopropylmalate). This is 2-isopropylmalate synthase from Salmonella choleraesuis (strain SC-B67).